A 741-amino-acid chain; its full sequence is 2-5A-dependent ribonuclease (741 aa).

The segment at 1-21 (MESRDHNNPQEGPTSSSGRRA) is disordered. A compositionally biased stretch (polar residues) spans 9–18 (PQEGPTSSSG). ANK repeat units lie at residues 24–53 (EDNH…NVNF), 58–87 (GGWT…DPVL), 91–120 (NGAT…DVNE), 124–153 (YGFT…NVNL), 167–197 (GGAT…DVNA), 201–234 (MGRN…DVNV), 238–268 (RGKT…EIND), 272–301 (DGKT…STDC), and 303–329 (DLVM…KEDF). 2-5A binding (P-loop) stretches follow at residues 229–242 (GADV…GKTP) and 253–275 (GLVQ…DGKT). The 222-residue stretch at 365–586 (IDEKYKIADT…LSDLLGHPFF (222 aa)) folds into the Protein kinase domain. The C6-type; atypical zinc-finger motif lies at 395–444 (CEGSPRAQREVSCLQSSRENSHLVTFYGSESHRGHLFVCVTLCEQTLEAC). The 135-residue stretch at 589 to 723 (WESRYRTLRN…KHFPQTHSPN (135 aa)) folds into the KEN domain. Lys684 bears the N6-acetyllysine mark. A disordered region spans residues 715–741 (HFPQTHSPNKPQCDGAGGASGLASPGC).

This sequence belongs to the protein kinase superfamily. Monomer (inactive form) or homodimer. Interacts with ABCE1; this interaction inhibits the RNASEL. It depends on Mn(2+) as a cofactor. Mg(2+) serves as cofactor. As to expression, highly expressed in spleen and thymus followed by prostate, testis, uterus, small intestine, colon and peripheral blood leukocytes.

The protein resides in the cytoplasm. It is found in the mitochondrion. With respect to regulation, after binding to 2-5A (5'-phosphorylated 2',5'-linked oligoadenylates) the homodimerization and subsequent activation occurs. Inhibited by RNASEL inhibitor ABCE1/RLI, a cytoplasmic member of the ATP-binding cassette (ABC) transporter family. Functionally, endoribonuclease that functions in the interferon (IFN) antiviral response. In INF treated and virus infected cells, RNASEL probably mediates its antiviral effects through a combination of direct cleavage of single-stranded viral RNAs, inhibition of protein synthesis through the degradation of rRNA, induction of apoptosis, and induction of other antiviral genes. RNASEL mediated apoptosis is the result of a JNK-dependent stress-response pathway leading to cytochrome c release from mitochondria and caspase-dependent apoptosis. Therefore, activation of RNASEL could lead to elimination of virus infected cells under some circumstances. In the crosstalk between autophagy and apoptosis proposed to induce autophagy as an early stress response to small double-stranded RNA and at later stages of prolonged stress to activate caspase-dependent proteolytic cleavage of BECN1 to terminate autophagy and promote apoptosis. Might play a central role in the regulation of mRNA turnover. Cleaves 3' of UpNp dimers, with preference for UU and UA sequences, to sets of discrete products ranging from between 4 and 22 nucleotides in length. This chain is 2-5A-dependent ribonuclease (RNASEL), found in Homo sapiens (Human).